Reading from the N-terminus, the 389-residue chain is Trans-2-enoyl-CoA reductase [NADH] (389 aa).

Residues 47–52 (GASTGY), 73–74 (FE), 110–111 (DA), and 138–139 (LA) contribute to the NAD(+) site. Substrate is bound at residue tyrosine 224. Tyrosine 234 functions as the Proton donor in the catalytic mechanism. Residues lysine 243 and 272–274 (LVT) contribute to the NAD(+) site.

This sequence belongs to the TER reductase family. As to quaternary structure, monomer.

It carries out the reaction a 2,3-saturated acyl-CoA + NAD(+) = a (2E)-enoyl-CoA + NADH + H(+). It functions in the pathway lipid metabolism; fatty acid biosynthesis. Functionally, involved in the fatty acid synthesis (FAS II). Catalyzes the reduction of a carbon-carbon double bond in an enoyl moiety that is covalently linked to a coenzyme A (CoA). This chain is Trans-2-enoyl-CoA reductase [NADH], found in Clostridium perfringens (strain SM101 / Type A).